Reading from the N-terminus, the 484-residue chain is UDP-glucose:undecaprenyl-phosphate glucose-1-phosphate transferase (484 aa).

5 helical membrane passes run 37-57 (MVVA…VPAA), 59-79 (YRVA…LFPL), 93-113 (VVLG…ALIV), 122-142 (GWVG…RTLL), and 299-319 (ILAV…AVGV).

Belongs to the bacterial sugar transferase family.

Its subcellular location is the cell inner membrane. It carries out the reaction di-trans,octa-cis-undecaprenyl phosphate + UDP-alpha-D-glucose = alpha-D-glucosyl di-trans,octa-cis-undecaprenyl diphosphate + UMP. It participates in glycan biosynthesis; xanthan biosynthesis. In terms of biological role, is the initiating enzyme for the synthesis of the exopolysaccharide xanthan. Catalyzes the transfer of the glucose-1-phosphate moiety from UDP-Glc onto the carrier lipid undecaprenyl phosphate (C55-P), forming a phosphoanhydride bond yielding to glucosyl-pyrophosphoryl-undecaprenol (Glc-PP-C55). The chain is UDP-glucose:undecaprenyl-phosphate glucose-1-phosphate transferase (gumD) from Xanthomonas campestris pv. campestris.